Reading from the N-terminus, the 72-residue chain is Large ribosomal subunit protein bL31 (72 aa).

Positions 16, 18, 38, and 41 each coordinate Zn(2+).

The protein belongs to the bacterial ribosomal protein bL31 family. Type A subfamily. As to quaternary structure, part of the 50S ribosomal subunit. The cofactor is Zn(2+).

Functionally, binds the 23S rRNA. This chain is Large ribosomal subunit protein bL31, found in Vibrio cholerae serotype O1 (strain ATCC 39541 / Classical Ogawa 395 / O395).